A 154-amino-acid polypeptide reads, in one-letter code: Putative lipoprotein MAB_4074c (154 aa).

Positions 1–21 (MMNRVIVGAMGLLAAGAVVVG) are cleaved as a signal peptide. Cys22 carries N-palmitoyl cysteine lipidation. A lipid anchor (S-diacylglycerol cysteine) is attached at Cys22.

Belongs to the mycobacterial 19 kDa antigen family.

The protein localises to the cell membrane. This is Putative lipoprotein MAB_4074c from Mycobacteroides abscessus (strain ATCC 19977 / DSM 44196 / CCUG 20993 / CIP 104536 / JCM 13569 / NCTC 13031 / TMC 1543 / L948) (Mycobacterium abscessus).